Reading from the N-terminus, the 373-residue chain is 3',5'-bisphosphate nucleotidase AHL (373 aa).

Catalysis depends on Asp-52, which acts as the Proton acceptor. Residues Glu-77, Asp-144, Val-146, and Asp-147 each coordinate Mg(2+). Residue Thr-149 is the Proton acceptor of the active site. Residues Thr-149, Ser-281, Lys-284, Lys-298, and Asp-310 each contribute to the adenosine 3',5'-bisphosphate site. AMP is bound by residues Ser-281, Lys-284, Lys-298, and Asp-310. Residue Asp-310 coordinates Mg(2+).

This sequence belongs to the inositol monophosphatase superfamily. Mg(2+) serves as cofactor. Expressed in roots, leaves, stems, flowers and siliques.

The enzyme catalyses adenosine 3',5'-bisphosphate + H2O = AMP + phosphate. It carries out the reaction 3'-phosphoadenylyl sulfate + H2O = adenosine 5'-phosphosulfate + phosphate. With respect to regulation, inhibited by Li(+) (IC(50)=10 mM), Na(+) (IC(50)=50 mM) and Ca(2+) (IC(50)=0.06 mM). Functionally, phosphatase that converts adenosine 3'-phosphate 5'-phosphosulfate (PAPS) to adenosine 5'-phosphosulfate (APS) and 3'-phosphoadenosine 5'-phosphate (3'-PAP) to AMP. May regulate the flux of sulfur in the sulfur-activation pathway by converting PAPS to APS. Prevents both the toxicity of PAP on RNA processing enzymes as well as the product inhibition by PAP of sulfate conjugation. The polypeptide is 3',5'-bisphosphate nucleotidase AHL (Arabidopsis thaliana (Mouse-ear cress)).